Here is a 212-residue protein sequence, read N- to C-terminus: uncharacterized protein (212 aa).

2 consecutive transmembrane segments (helical) span residues 54–74 (LCFA…GYAG) and 79–99 (WIIC…ALLL).

The protein localises to the cell membrane. This is an uncharacterized protein from Chlamydia pneumoniae (Chlamydophila pneumoniae).